The chain runs to 366 residues: Histidinol-phosphate aminotransferase 2 (366 aa).

Residues 1–11 (MQVKDQLSSLQ) show a composition bias toward polar residues. Residues 1-21 (MQVKDQLSSLQPYKPGKSPEQ) are disordered. An N6-(pyridoxal phosphate)lysine modification is found at Lys-222.

It belongs to the class-II pyridoxal-phosphate-dependent aminotransferase family. Histidinol-phosphate aminotransferase subfamily. As to quaternary structure, homodimer. It depends on pyridoxal 5'-phosphate as a cofactor.

It carries out the reaction L-histidinol phosphate + 2-oxoglutarate = 3-(imidazol-4-yl)-2-oxopropyl phosphate + L-glutamate. It functions in the pathway amino-acid biosynthesis; L-histidine biosynthesis; L-histidine from 5-phospho-alpha-D-ribose 1-diphosphate: step 7/9. This is Histidinol-phosphate aminotransferase 2 from Bacillus cereus (strain ATCC 10987 / NRS 248).